We begin with the raw amino-acid sequence, 52 residues long: Protein PROPEP890 (52 aa).

Residues 27–52 (PQADLPQTPNSQVRIVSRDLPRGGNY) form a disordered region. Residues 31-40 (LPQTPNSQVR) show a composition bias toward polar residues. Basic and acidic residues predominate over residues 42–52 (VSRDLPRGGNY).

In terms of tissue distribution, expressed in roots. Barely detected in flowers.

Functionally, produces a rapid alkalinization of the cellular media and the induction of defense-related genes, including chitinase 1b, chalcone synthase and CYP93A1. Not active in tobacco or Arabidopsis. The receptor for GmPep890 is probably different from the receptor for GmSubPep. In Glycine max (Soybean), this protein is Protein PROPEP890 (PROPEP890).